The chain runs to 347 residues: NADH-ubiquinone oxidoreductase chain 2 (347 aa).

The next 10 helical transmembrane spans lie at 3–23 (PLIL…VMMS), 25–45 (HWLM…PLLM), 59–79 (YFLT…INLL), 96–116 (IIMT…FWVP), 148–170 (GINL…WGGL), 178–198 (ILAY…AFNP), 200–220 (MTLL…MLFM), 247–267 (IMLS…WMII), 276–296 (ITLA…YMRL), and 326–346 (LPML…ITLL).

Belongs to the complex I subunit 2 family. As to quaternary structure, core subunit of respiratory chain NADH dehydrogenase (Complex I) which is composed of 45 different subunits. Interacts with TMEM242.

The protein localises to the mitochondrion inner membrane. It catalyses the reaction a ubiquinone + NADH + 5 H(+)(in) = a ubiquinol + NAD(+) + 4 H(+)(out). Functionally, core subunit of the mitochondrial membrane respiratory chain NADH dehydrogenase (Complex I) which catalyzes electron transfer from NADH through the respiratory chain, using ubiquinone as an electron acceptor. Essential for the catalytic activity and assembly of complex I. This Saccopteryx leptura (Lesser sac-winged bat) protein is NADH-ubiquinone oxidoreductase chain 2.